The primary structure comprises 221 residues: GTP cyclohydrolase 1 (221 aa).

Zn(2+) is bound by residues C109, H112, and C180.

Belongs to the GTP cyclohydrolase I family. As to quaternary structure, toroid-shaped homodecamer, composed of two pentamers of five dimers.

It catalyses the reaction GTP + H2O = 7,8-dihydroneopterin 3'-triphosphate + formate + H(+). Its pathway is cofactor biosynthesis; 7,8-dihydroneopterin triphosphate biosynthesis; 7,8-dihydroneopterin triphosphate from GTP: step 1/1. This chain is GTP cyclohydrolase 1, found in Serratia proteamaculans (strain 568).